The chain runs to 148 residues: MKVLLLQDVEHLGKAGEIKDVSGGFGRNYLLPKGFAVLATKSQVKQAEERLAAQRRKAEAARKEAEALAARLAELTLTFTVKVGEQDRLYGSVTNADIAAKLHEVAGIEIDRRKIGLEDPIKRTGEYEVPVELMSGVSSTLKVVVVGE.

It belongs to the bacterial ribosomal protein bL9 family.

In terms of biological role, binds to the 23S rRNA. The sequence is that of Large ribosomal subunit protein bL9 from Chloroflexus aurantiacus (strain ATCC 29366 / DSM 635 / J-10-fl).